We begin with the raw amino-acid sequence, 198 residues long: Methyl-coenzyme M reductase I operon protein C (198 aa).

MCR is composed of three subunits: alpha, beta, and gamma. The function of proteins C and D is not known.

In Methanothermobacter marburgensis (strain ATCC BAA-927 / DSM 2133 / JCM 14651 / NBRC 100331 / OCM 82 / Marburg) (Methanobacterium thermoautotrophicum), this protein is Methyl-coenzyme M reductase I operon protein C (mcrC).